Reading from the N-terminus, the 264-residue chain is Thymidylate synthase 2 (264 aa).

R21 is a dUMP binding site. Residue H51 coordinates (6R)-5,10-methylene-5,6,7,8-tetrahydrofolate. 126 to 127 (RR) is a dUMP binding site. C146 serves as the catalytic Nucleophile. DUMP contacts are provided by residues 166 to 169 (RSAD), N177, and 207 to 209 (HIY). Residue D169 participates in (6R)-5,10-methylene-5,6,7,8-tetrahydrofolate binding. A (6R)-5,10-methylene-5,6,7,8-tetrahydrofolate-binding site is contributed by S263.

This sequence belongs to the thymidylate synthase family. Bacterial-type ThyA subfamily. As to quaternary structure, homodimer.

Its subcellular location is the cytoplasm. The enzyme catalyses dUMP + (6R)-5,10-methylene-5,6,7,8-tetrahydrofolate = 7,8-dihydrofolate + dTMP. The protein operates within pyrimidine metabolism; dTTP biosynthesis. Functionally, catalyzes the reductive methylation of 2'-deoxyuridine-5'-monophosphate (dUMP) to 2'-deoxythymidine-5'-monophosphate (dTMP) while utilizing 5,10-methylenetetrahydrofolate (mTHF) as the methyl donor and reductant in the reaction, yielding dihydrofolate (DHF) as a by-product. This enzymatic reaction provides an intracellular de novo source of dTMP, an essential precursor for DNA biosynthesis. This Bacillus spizizenii (strain ATCC 23059 / NRRL B-14472 / W23) (Bacillus subtilis subsp. spizizenii) protein is Thymidylate synthase 2.